The following is a 316-amino-acid chain: Ribosomal RNA small subunit methyltransferase H (316 aa).

Residues 42 to 44, aspartate 62, phenylalanine 86, aspartate 104, and glutamine 111 each bind S-adenosyl-L-methionine; that span reads GGH.

It belongs to the methyltransferase superfamily. RsmH family.

The protein resides in the cytoplasm. The enzyme catalyses cytidine(1402) in 16S rRNA + S-adenosyl-L-methionine = N(4)-methylcytidine(1402) in 16S rRNA + S-adenosyl-L-homocysteine + H(+). Its function is as follows. Specifically methylates the N4 position of cytidine in position 1402 (C1402) of 16S rRNA. This Polynucleobacter necessarius subsp. necessarius (strain STIR1) protein is Ribosomal RNA small subunit methyltransferase H.